Reading from the N-terminus, the 416-residue chain is Gamma-glutamyl phosphate reductase (416 aa).

The protein belongs to the gamma-glutamyl phosphate reductase family.

It localises to the cytoplasm. The catalysed reaction is L-glutamate 5-semialdehyde + phosphate + NADP(+) = L-glutamyl 5-phosphate + NADPH + H(+). It participates in amino-acid biosynthesis; L-proline biosynthesis; L-glutamate 5-semialdehyde from L-glutamate: step 2/2. Functionally, catalyzes the NADPH-dependent reduction of L-glutamate 5-phosphate into L-glutamate 5-semialdehyde and phosphate. The product spontaneously undergoes cyclization to form 1-pyrroline-5-carboxylate. The polypeptide is Gamma-glutamyl phosphate reductase (Leptospira interrogans serogroup Icterohaemorrhagiae serovar copenhageni (strain Fiocruz L1-130)).